A 316-amino-acid polypeptide reads, in one-letter code: Taste receptor type 2 member 3 (316 aa).

The Extracellular segment spans residues 1–7; it reads MFGFIEG. Residues 8–28 form a helical membrane-spanning segment; that stretch reads VFLVLTITEFILGNLVNGFIV. Residues 29-50 lie on the Cytoplasmic side of the membrane; sequence SINSSYWFKSKKISLSNFIITS. The helical transmembrane segment at 51-71 threads the bilayer; it reads LALFRIFLLWIIFIDSLIIVF. The Extracellular segment spans residues 72 to 86; that stretch reads SYQTHDSGIMMQLID. A helical transmembrane segment spans residues 87 to 107; it reads VFWTFTNHFSIWLISCLSVFY. The Cytoplasmic portion of the chain corresponds to 108 to 128; it reads CLKIASFSHPSFLWLKWRASR. The chain crosses the membrane as a helical span at residues 129-149; the sequence is VVVGMLWGALLLSCVSTMSLM. The Extracellular portion of the chain corresponds to 150–186; that stretch reads NEFKIYSALTRSKDTPNMTEYIRLKRQEYNLMHVLGN. N166 is a glycosylation site (N-linked (GlcNAc...) asparagine). The helical transmembrane segment at 187–207 threads the bilayer; it reads LWKIPSLIVSLVAYLLLLLSL. Over 208 to 234 the chain is Cytoplasmic; sequence GKHTQQMQQYSIDSRDQSAEAHKRAMR. The helical transmembrane segment at 235-255 threads the bilayer; that stretch reads IISSFLLFFLFYFLSFMILSS. At 256-266 the chain is on the extracellular side; that stretch reads SRFLPETRIAR. A helical membrane pass occupies residues 267-287; that stretch reads IIGVVISMSYLVGDSFILIVC. Residues 288–316 are Cytoplasmic-facing; that stretch reads NNKLKHTFVAMLPCECGHLKPGSKGPSAS.

This sequence belongs to the G-protein coupled receptor T2R family.

It localises to the membrane. In terms of biological role, gustducin-coupled receptor implicated in the perception of bitter compounds in the oral cavity and the gastrointestinal tract. Signals through PLCB2 and the calcium-regulated cation channel TRPM5. The polypeptide is Taste receptor type 2 member 3 (Tas2r3) (Mus musculus (Mouse)).